Here is a 220-residue protein sequence, read N- to C-terminus: B-cell antigen receptor complex-associated protein alpha chain (220 aa).

A signal peptide spans methionine 1–alanine 28. One can recognise an Ig-like C2-type domain in the interval leucine 29–leucine 117. Over leucine 29 to arginine 137 the chain is Extracellular. Cysteine 50 and cysteine 101 form a disulfide bridge. Asparagine 58 and asparagine 68 each carry an N-linked (GlcNAc...) asparagine glycan. The helical transmembrane segment at isoleucine 138–phenylalanine 159 threads the bilayer. At arginine 160 to proline 220 the chain is on the cytoplasmic side. The ITAM domain occupies aspartate 171 to glycine 199. Phosphotyrosine; by SRC-type Tyr-kinases occurs at positions 182 and 193. An Asymmetric dimethylarginine; by PRMT1 modification is found at arginine 198. Tyrosine 204 is modified (phosphotyrosine; by Tyr-kinases).

Heterodimer of alpha and beta chains; disulfide-linked. Part of the B-cell antigen receptor complex where the alpha/beta chain heterodimer is non-covalently associated with an antigen-specific membrane-bound surface immunoglobulin of two heavy chains and two light chains. Interacts through its phosphorylated ITAM domain with the SH2 domains of SYK which stimulates SYK autophosphorylation and activation. Also interacts, when phosphorylated on Tyr-204, with the SH2 domain of BLNK/SLP65, bringing BLNK into proximity with SYK and allowing SYK to phosphorylate BLNK which is necessary for trafficking of the BCR to late endosomes. Interacts with Src-family tyrosine kinases including FYN and LYN, increasing their activity. Phosphorylated on tyrosine, serine and threonine residues upon B-cell activation. Phosphorylation of tyrosine residues by Src-family kinases, including LYN, is an early and essential feature of the BCR signaling cascade. The phosphorylated tyrosines serve as docking sites for SH2-domain containing kinases, leading to their activation which in turn leads to phosphorylation of downstream targets. Phosphorylation of serine and threonine residues may prevent subsequent tyrosine phosphorylation. In terms of processing, arginine methylation in the ITAM domain may interfere with the binding of SYK. It promotes signals leading to B-cell differentiation. B-cells.

It localises to the cell membrane. Functionally, required in cooperation with CD79B for initiation of the signal transduction cascade activated by binding of antigen to the B-cell antigen receptor complex (BCR) which leads to internalization of the complex, trafficking to late endosomes and antigen presentation. Also required for BCR surface expression and for efficient differentiation of pro- and pre-B-cells. Stimulates SYK autophosphorylation and activation. Binds to BLNK, bringing BLNK into proximity with SYK and allowing SYK to phosphorylate BLNK. Also interacts with and increases activity of some Src-family tyrosine kinases. Represses BCR signaling during development of immature B-cells. The polypeptide is B-cell antigen receptor complex-associated protein alpha chain (Cd79a) (Mus musculus (Mouse)).